A 136-amino-acid chain; its full sequence is Protein PsiE (136 aa).

Helical transmembrane passes span 15-35 (ILQNVLNLGLLTLGLILVVFL), 55-75 (YELVEGLVIYFLYFEFIALIV), 83-103 (HFPLRYFVYIGITAIVRLIIV), and 108-128 (PMDVLLYSAAILLLVITLWLC).

The protein belongs to the PsiE family.

It localises to the cell inner membrane. This chain is Protein PsiE, found in Salmonella agona (strain SL483).